The primary structure comprises 585 residues: ATP-dependent lipid A-core flippase (585 aa).

The next 6 helical transmembrane spans lie at 23-43, 64-84, 140-160, 163-183, 247-267, and 273-293; these read LAFGVAIIGMVGYSLIDAYVI, IAAYFVIPVFIARGIFNFMGT, AFLTLVREGALVFGLLFWMFY, WQLSLVFILIGPLVAMIVSVV, ILSVSSIQVIASVALAVVLYI, and FITDLTPGTFVTVVVAMTMLL. The ABC transmembrane type-1 domain maps to 27–308; that stretch reads VAIIGMVGYS…LTTVNSEFQK (282 aa). The region spanning 340–576 is the ABC transporter domain; that stretch reads LEFRDVTFHY…DGAYAQLHKL (237 aa). 374-381 lines the ATP pocket; it reads GRSGSGKS.

Belongs to the ABC transporter superfamily. Lipid exporter (TC 3.A.1.106) family. As to quaternary structure, homodimer.

The protein localises to the cell inner membrane. It catalyses the reaction ATP + H2O + lipid A-core oligosaccharideSide 1 = ADP + phosphate + lipid A-core oligosaccharideSide 2.. Involved in lipopolysaccharide (LPS) biosynthesis. Translocates lipid A-core from the inner to the outer leaflet of the inner membrane. Transmembrane domains (TMD) form a pore in the inner membrane and the ATP-binding domain (NBD) is responsible for energy generation. The protein is ATP-dependent lipid A-core flippase of Pseudoalteromonas atlantica (strain T6c / ATCC BAA-1087).